Reading from the N-terminus, the 606-residue chain is DNA mismatch repair protein MutL (606 aa).

The segment at 340–366 (MNAFRPGYSPSGLRPSPSATWSAATSP) is disordered. Over residues 353 to 366 (RPSPSATWSAATSP) the composition is skewed to low complexity.

It belongs to the DNA mismatch repair MutL/HexB family.

Functionally, this protein is involved in the repair of mismatches in DNA. It is required for dam-dependent methyl-directed DNA mismatch repair. May act as a 'molecular matchmaker', a protein that promotes the formation of a stable complex between two or more DNA-binding proteins in an ATP-dependent manner without itself being part of a final effector complex. This Agrobacterium fabrum (strain C58 / ATCC 33970) (Agrobacterium tumefaciens (strain C58)) protein is DNA mismatch repair protein MutL.